A 127-amino-acid chain; its full sequence is MQGSVQIQKGNISSSYTPEKHPSHPTSANGSMSPKRICELRKEDPSSLHKQLLKNSLEKGTEHCDRTTKTYGQIFQLFCLCCAGAAPFYRARAFRLQSTFLIYTLHCSSDSVSTSTHYFRRLYSRRW.

The segment covering 1 to 17 has biased composition (polar residues); the sequence is MQGSVQIQKGNISSSYT. A disordered region spans residues 1–36; the sequence is MQGSVQIQKGNISSSYTPEKHPSHPTSANGSMSPKR.

This is an uncharacterized protein from Treponema pallidum (strain Nichols).